The following is a 188-amino-acid chain: Glutathione S-transferase 2 (188 aa).

Residues 2–79 (VHYKLMCFDV…FLARQYGYSG (78 aa)) enclose the GST N-terminal domain. Residues Lys43, 49–51 (GQL), and 63–64 (QS) contribute to the glutathione site. One can recognise a GST C-terminal domain in the interval 81–188 (TPTEEMQVDS…PHLNVFIRKL (108 aa)).

It belongs to the GST superfamily. Sigma family.

The catalysed reaction is RX + glutathione = an S-substituted glutathione + a halide anion + H(+). Its function is as follows. Conjugation of reduced glutathione to a wide number of exogenous and endogenous hydrophobic electrophiles. In Caenorhabditis elegans, this protein is Glutathione S-transferase 2 (gst-2).